Here is a 177-residue protein sequence, read N- to C-terminus: SAYSvFN domain-containing protein 1 (177 aa).

Residues 1–100 (MADFQEQLRQ…CLKYTLWTVY (100 aa)) lie on the Cytoplasmic side of the membrane. Residues 57–70 (SENSQDEAVTSSES) are compositionally biased toward polar residues. The segment at 57–85 (SENSQDEAVTSSESELVPEEQPTRSTDHH) is disordered. An intramembrane region (helical) is located at residues 101–121 (LLFWITLYVIAIKLSFGLVFL). Over 122–177 (MFSALFGIYFNTRTEPKKRNEMSAYSVFNKNCESIDGTLKAEQFEREIRYGSGSVR) the chain is Cytoplasmic.

The protein belongs to the SAYSD1 family.

The protein localises to the endoplasmic reticulum membrane. In terms of biological role, ufmylation 'reader' component of a translocation-associated quality control pathway, a mechanism that takes place when a ribosome has stalled during translation, and which is required to degrade clogged substrates. Specifically recognizes and binds ufmylated ribosomes when a ribosome has stalled, promoting the transport of stalled nascent chain to lysosomes for degradation. The polypeptide is SAYSvFN domain-containing protein 1 (Drosophila melanogaster (Fruit fly)).